Reading from the N-terminus, the 396-residue chain is Tryptophan synthase beta chain (396 aa).

Residue lysine 86 is modified to N6-(pyridoxal phosphate)lysine.

Belongs to the TrpB family. As to quaternary structure, tetramer of two alpha and two beta chains. It depends on pyridoxal 5'-phosphate as a cofactor.

It catalyses the reaction (1S,2R)-1-C-(indol-3-yl)glycerol 3-phosphate + L-serine = D-glyceraldehyde 3-phosphate + L-tryptophan + H2O. It functions in the pathway amino-acid biosynthesis; L-tryptophan biosynthesis; L-tryptophan from chorismate: step 5/5. Functionally, the beta subunit is responsible for the synthesis of L-tryptophan from indole and L-serine. This is Tryptophan synthase beta chain from Proteus mirabilis (strain HI4320).